The sequence spans 1229 residues: Chitin synthase 4 (1229 aa).

Residues 1–196 (MSLPERPGAK…IVKEGKRKEK (196 aa)) are disordered. At 1 to 202 (MSLPERPGAK…RKEKIPEQLR (202 aa)) the chain is on the cytoplasmic side. A compositionally biased stretch (basic residues) spans 18 to 27 (SYRKSPSRRN). Residues 43–66 (GQHQRGPSVNSFAETIRSPNSNIE) show a composition bias toward polar residues. Over residues 92–105 (IRPERNRIDRDHPN) the composition is skewed to basic and acidic residues. The span at 137–150 (SGPPSGSNSASGSG) shows a compositional bias: low complexity. 2 stretches are compositionally biased toward basic and acidic residues: residues 164 to 177 (SGRE…DNTR) and 187 to 196 (IVKEGKRKEK). Residues 203–223 (PPSAWNVYCAVITFWSPDFIM) form a helical membrane-spanning segment. The Extracellular segment spans residues 224–240 (KCCGMPAKAQRRAWREK). Residues 241–261 (IGLISLILIIMGVVGFLTFGF) traverse the membrane as a helical segment. At 262–495 (NQAVCGGPVL…IKVGTVDTDT (234 aa)) the chain is on the cytoplasmic side. Residues 496–516 (VGCIAAKVVLYVSLALILSVV) form a helical membrane-spanning segment. Residues 517 to 1054 (GARFTLALIF…LCGTFCFSMQ (538 aa)) are Extracellular-facing. Disordered regions lie at residues 539–589 (TSQT…RSSF) and 601–648 (GAER…DPYA). The segment covering 568-581 (GDVGSSVAGASSSD) has biased composition (low complexity). N-linked (GlcNAc...) asparagine glycosylation is found at Asn-608, Asn-635, and Asn-1030. Residues 608-648 (NKSMPTTMASQASGGYMGPSSTAYRETNESRTSFLKSDPYA) show a composition bias toward polar residues. The helical transmembrane segment at 1055 to 1075 (FVIFIELIGTLVLPAAIAFTF) threads the bilayer. Topologically, residues 1076–1088 (YVVIISIINQPPQ) are cytoplasmic. A helical transmembrane segment spans residues 1089–1109 (IIPLVLLGLILGLPAILIIIT). At 1110-1114 (AHSWS) the chain is on the extracellular side. A helical membrane pass occupies residues 1115 to 1135 (YVLWMLIYLLSLPVWNFVLPA). Residues 1136 to 1229 (YAFWKFDDFS…QQYDEYYSDA (94 aa)) lie on the Cytoplasmic side of the membrane. The tract at residues 1210-1229 (WASAPPHHHQQQYDEYYSDA) is disordered.

Belongs to the chitin synthase family. Class IV subfamily.

The protein resides in the cell membrane. It catalyses the reaction [(1-&gt;4)-N-acetyl-beta-D-glucosaminyl](n) + UDP-N-acetyl-alpha-D-glucosamine = [(1-&gt;4)-N-acetyl-beta-D-glucosaminyl](n+1) + UDP + H(+). Its function is as follows. Polymerizes chitin, a structural polymer of the cell wall and septum, by transferring the sugar moiety of UDP-GlcNAc to the non-reducing end of the growing chitin polymer. Might function as a negative regulator on expression of other CHS genes. In Pyricularia oryzae (strain 70-15 / ATCC MYA-4617 / FGSC 8958) (Rice blast fungus), this protein is Chitin synthase 4.